A 237-amino-acid chain; its full sequence is Pyridoxine 5'-phosphate synthase (237 aa).

2 residues coordinate 3-amino-2-oxopropyl phosphate: Asn7 and Arg18. The active-site Proton acceptor is His43. Residues Arg45 and His50 each contribute to the 1-deoxy-D-xylulose 5-phosphate site. Glu70 acts as the Proton acceptor in catalysis. Thr100 contacts 1-deoxy-D-xylulose 5-phosphate. The active-site Proton donor is His190. Residues Asp191 and 213–214 (GH) each bind 3-amino-2-oxopropyl phosphate.

This sequence belongs to the PNP synthase family. As to quaternary structure, homooctamer; tetramer of dimers.

The protein resides in the cytoplasm. The catalysed reaction is 3-amino-2-oxopropyl phosphate + 1-deoxy-D-xylulose 5-phosphate = pyridoxine 5'-phosphate + phosphate + 2 H2O + H(+). The protein operates within cofactor biosynthesis; pyridoxine 5'-phosphate biosynthesis; pyridoxine 5'-phosphate from D-erythrose 4-phosphate: step 5/5. In terms of biological role, catalyzes the complicated ring closure reaction between the two acyclic compounds 1-deoxy-D-xylulose-5-phosphate (DXP) and 3-amino-2-oxopropyl phosphate (1-amino-acetone-3-phosphate or AAP) to form pyridoxine 5'-phosphate (PNP) and inorganic phosphate. The protein is Pyridoxine 5'-phosphate synthase of Christiangramia forsetii (strain DSM 17595 / CGMCC 1.15422 / KT0803) (Gramella forsetii).